The primary structure comprises 119 residues: Acidic phospholipase A2 natratoxin (119 aa).

Disulfide bonds link Cys-11–Cys-71, Cys-26–Cys-118, Cys-28–Cys-44, Cys-43–Cys-99, Cys-50–Cys-92, Cys-60–Cys-85, and Cys-78–Cys-90. Ca(2+)-binding residues include Tyr-27, Gly-29, and Gly-31. The active site involves His-47. Asp-48 is a Ca(2+) binding site. The active site involves Asp-93.

The protein belongs to the phospholipase A2 family. Group I subfamily. D49 sub-subfamily. Requires Ca(2+) as cofactor. In terms of tissue distribution, expressed by the venom gland.

The protein localises to the secreted. It carries out the reaction a 1,2-diacyl-sn-glycero-3-phosphocholine + H2O = a 1-acyl-sn-glycero-3-phosphocholine + a fatty acid + H(+). Its function is as follows. Snake venom phospholipase A2 (PLA2) that has an effectively inhibitory effect on A-type K(+) currents (Kv/KCN) in acutely dissociated rat dorsal root ganglion (DRG) neurons. This inhibitory effect is independent of its enzymatic activity. PLA2 catalyzes the calcium-dependent hydrolysis of the 2-acyl groups in 3-sn-phosphoglycerides. This chain is Acidic phospholipase A2 natratoxin, found in Naja atra (Chinese cobra).